Here is a 154-residue protein sequence, read N- to C-terminus: Ribosomal RNA large subunit methyltransferase H (154 aa).

S-adenosyl-L-methionine contacts are provided by L70 and G102.

Belongs to the RNA methyltransferase RlmH family. As to quaternary structure, homodimer.

It localises to the cytoplasm. It catalyses the reaction pseudouridine(1915) in 23S rRNA + S-adenosyl-L-methionine = N(3)-methylpseudouridine(1915) in 23S rRNA + S-adenosyl-L-homocysteine + H(+). In terms of biological role, specifically methylates the pseudouridine at position 1915 (m3Psi1915) in 23S rRNA. This chain is Ribosomal RNA large subunit methyltransferase H, found in Hyphomonas neptunium (strain ATCC 15444).